A 386-amino-acid chain; its full sequence is Cytochrome b (386 aa).

4 helical membrane passes run Phe-32–Met-52, Trp-76–Gly-98, Pro-113–Val-133, and Phe-179–Leu-199. His-82 and His-96 together coordinate heme b. Positions 183 and 197 each coordinate heme b. His-202 is a binding site for a ubiquinone. A run of 4 helical transmembrane segments spans residues Tyr-225–Phe-245, Leu-289–Asp-309, Leu-321–Ser-341, and Phe-348–Pro-368.

This sequence belongs to the cytochrome b family. As to quaternary structure, fungal cytochrome b-c1 complex contains 10 subunits; 3 respiratory subunits, 2 core proteins and 5 low-molecular weight proteins. Cytochrome b-c1 complex is a homodimer. It depends on heme b as a cofactor.

Its subcellular location is the mitochondrion inner membrane. Component of the ubiquinol-cytochrome c reductase complex (complex III or cytochrome b-c1 complex) that is part of the mitochondrial respiratory chain. The b-c1 complex mediates electron transfer from ubiquinol to cytochrome c. Contributes to the generation of a proton gradient across the mitochondrial membrane that is then used for ATP synthesis. The chain is Cytochrome b (cob) from Rhizopus oryzae (Mucormycosis agent).